Here is a 556-residue protein sequence, read N- to C-terminus: MKKLLQAKALILALGLFQLPAIAQTQMQADRTNGQFATEEMQRAFQETNPPAGPVRAIAEYERSAAVLVRYPFGIPMELIKELAKNDKVITIVASESQKNTVITQYTQSGVNLSNCDFIIAKTDSYWTRDYTGWFAMYDTNKVGLVDFIYNRPRPNDDEFPKYEAQYLGIEMFGMKLKQTGGNYMTDGYGSAVQSHIAYTENSSLSQAQVNQKMKDYLGITHHDVVQDPNGEYINHVDCWGKYLAPNKILIRKVPDNHPQHQALEDMAAYFAAQTCAWGTKYEVYRALATNEQPYTNSLILNNRVFVPVNGPASVDNDALNVYKTAMPGYEIIGVKGASGTPWLGTDALHCRTHEVADKGYLYIKHYPILGEQAGPDYKIEADVVSCANATISPVQCYYRINGSGSFKAADMTMESTGHYTYSFTGLNKNDKVEYYISAADNSGRKETYPFIGEPDPFKFTCMNETNTCTVTGAAKALRAWFNAGRSELAVSVSLNIAGTYRIKLYNTAGEEVAAMTKELVAGTSVFSMDVYSQAPGTYVLVVEGNGIRETMKILK.

The N-terminal stretch at 1–23 (MKKLLQAKALILALGLFQLPAIA) is a signal peptide. Residues 24–43 (QTQMQADRTNGQFATEEMQR) constitute a propeptide that is removed on maturation. Cys-351 (amidino-cysteine intermediate) is an active-site residue.

The protein belongs to the agmatine deiminase family. FAD is required as a cofactor. The cofactor is FMN.

Its subcellular location is the secreted. Inhibited by cysteine and TLCK. Inhibited by high concentration of thiourea and thio-L-citrulline. In terms of biological role, deiminates the guanidino group of C-terminal arginine residues on a variety of peptides, including the vasoregulatory peptide-hormone bradykinin, to yield ammonia and a citrulline residue. May promote the growth of the pathogen in the periodontal pocket by producing ammonia, ammonia having a protective effect during acidic cleaning cycles in the mouth. In Porphyromonas gingivalis (strain ATCC BAA-308 / W83), this protein is Peptidylarginine deiminase.